A 235-amino-acid chain; its full sequence is uncharacterized protein (235 aa).

This is an uncharacterized protein from Escherichia coli (strain K12).